A 165-amino-acid polypeptide reads, in one-letter code: NADPH-dependent 7-cyano-7-deazaguanine reductase (165 aa).

C56 acts as the Thioimide intermediate in catalysis. The active-site Proton donor is the D63. Substrate-binding positions include 78-80 (VES) and 97-98 (HE).

The protein belongs to the GTP cyclohydrolase I family. QueF type 1 subfamily.

It localises to the cytoplasm. It catalyses the reaction 7-aminomethyl-7-carbaguanine + 2 NADP(+) = 7-cyano-7-deazaguanine + 2 NADPH + 3 H(+). The protein operates within tRNA modification; tRNA-queuosine biosynthesis. In terms of biological role, catalyzes the NADPH-dependent reduction of 7-cyano-7-deazaguanine (preQ0) to 7-aminomethyl-7-deazaguanine (preQ1). The sequence is that of NADPH-dependent 7-cyano-7-deazaguanine reductase from Bacillus cytotoxicus (strain DSM 22905 / CIP 110041 / 391-98 / NVH 391-98).